The sequence spans 103 residues: Putative septation protein SpoVG (103 aa).

It belongs to the SpoVG family.

Functionally, could be involved in septation. The polypeptide is Putative septation protein SpoVG (Exiguobacterium sibiricum (strain DSM 17290 / CCUG 55495 / CIP 109462 / JCM 13490 / 255-15)).